Consider the following 234-residue polypeptide: UPF0173 metal-dependent hydrolase Smed_0942 (234 aa).

This sequence belongs to the UPF0173 family.

This chain is UPF0173 metal-dependent hydrolase Smed_0942, found in Sinorhizobium medicae (strain WSM419) (Ensifer medicae).